The following is a 49-amino-acid chain: Large ribosomal subunit protein bL33A (49 aa).

The tract at residues 20-49 is disordered; it reads KKNKRNNPDRVEFKKYCPRDKKSTLHRETK. Positions 25–49 are enriched in basic and acidic residues; sequence NNPDRVEFKKYCPRDKKSTLHRETK.

Belongs to the bacterial ribosomal protein bL33 family. Part of the 50S ribosomal subunit. Interacts with VmlR.

In Bacillus subtilis (strain 168), this protein is Large ribosomal subunit protein bL33A (rpmGA).